The sequence spans 805 residues: Translation initiation factor IF-2 (805 aa).

Disordered regions lie at residues 68 to 89 and 141 to 215; these read VVTE…EKKE and KEKE…KEKK. Residues 79–89 are compositionally biased toward basic and acidic residues; that stretch reads VEEKKEEEKKE. The tr-type G domain maps to 306 to 474; that stretch reads PRPPIVVVMG…MILLLADILE (169 aa). The interval 315–322 is G1; that stretch reads GHVDHGKT. 315–322 contributes to the GTP binding site; sequence GHVDHGKT. Positions 340–344 are G2; the sequence is GITQH. Residues 362-365 form a G3 region; that stretch reads DTPG. Residues 362 to 366 and 416 to 419 each bind GTP; these read DTPGH and NKID. The tract at residues 416–419 is G4; it reads NKID. The interval 452 to 454 is G5; that stretch reads SAK.

It belongs to the TRAFAC class translation factor GTPase superfamily. Classic translation factor GTPase family. IF-2 subfamily.

It localises to the cytoplasm. Its function is as follows. One of the essential components for the initiation of protein synthesis. Protects formylmethionyl-tRNA from spontaneous hydrolysis and promotes its binding to the 30S ribosomal subunits. Also involved in the hydrolysis of GTP during the formation of the 70S ribosomal complex. The sequence is that of Translation initiation factor IF-2 (infB) from Aquifex aeolicus (strain VF5).